A 474-amino-acid chain; its full sequence is Phosphomannomutase (474 aa).

The active-site Phosphoserine intermediate is S101. Mg(2+)-binding residues include S101, D242, D244, and D246.

It belongs to the phosphohexose mutase family. Mg(2+) is required as a cofactor.

It carries out the reaction alpha-D-mannose 1-phosphate = D-mannose 6-phosphate. This chain is Phosphomannomutase (noeK), found in Sinorhizobium fredii (strain NBRC 101917 / NGR234).